Consider the following 270-residue polypeptide: 3-phenylpropionate-dihydrodiol/cinnamic acid-dihydrodiol dehydrogenase (270 aa).

An NAD(+)-binding site is contributed by 10-34 (FITGGGSGLGLALVERFIEEGAQVA). Ser-143 is a binding site for substrate. Tyr-156 serves as the catalytic Proton acceptor.

It belongs to the short-chain dehydrogenases/reductases (SDR) family.

It catalyses the reaction 3-(cis-5,6-dihydroxycyclohexa-1,3-dien-1-yl)propanoate + NAD(+) = 3-(2,3-dihydroxyphenyl)propanoate + NADH + H(+). The enzyme catalyses (2E)-3-(cis-5,6-dihydroxycyclohexa-1,3-dien-1-yl)prop-2-enoate + NAD(+) = (2E)-3-(2,3-dihydroxyphenyl)prop-2-enoate + NADH + H(+). The protein operates within aromatic compound metabolism; 3-phenylpropanoate degradation. Its function is as follows. Converts 3-phenylpropionate-dihydrodiol (PP-dihydrodiol) and cinnamic acid-dihydrodiol (CI-dihydrodiol) into 3-(2,3-dihydroxylphenyl)propanoic acid (DHPP) and 2,3-dihydroxicinnamic acid (DHCI), respectively. The polypeptide is 3-phenylpropionate-dihydrodiol/cinnamic acid-dihydrodiol dehydrogenase (Escherichia coli O17:K52:H18 (strain UMN026 / ExPEC)).